The primary structure comprises 66 residues: MQNGKVKWFNNEKGFGFIEVEGGDDVFVHFTAIEGDGYKSLEEGQEVSFEIVEGNRGPQASNVVKL.

The CSD domain maps to 4-63 (GKVKWFNNEKGFGFIEVEGGDDVFVHFTAIEGDGYKSLEEGQEVSFEIVEGNRGPQASNV).

It is found in the cytoplasm. This chain is Cold shock protein CspD (cspD), found in Bacillus subtilis (strain 168).